Consider the following 738-residue polypeptide: Translation initiation factor IF-2 (738 aa).

Residues 1 to 10 (MNSMRISGHQ) are compositionally biased toward polar residues. Residues 1 to 150 (MNSMRISGHQ…PTTVRAPVRP (150 aa)) form a disordered region. Residues 22 to 102 (AGGGRGPGNP…GGRGPSGGRG (81 aa)) are compositionally biased toward gly residues. The segment covering 103–120 (GDGRRREESPTDHEDGRI) has biased composition (basic and acidic residues). Low complexity predominate over residues 121 to 143 (NRSGRSTSTTTTRTSSTLARPTT). In terms of domain architecture, tr-type G spans 238-405 (PRPPVVTIMG…MILLVADLNE (168 aa)). The G1 stretch occupies residues 247-254 (GHVDHGKT). Residue 247–254 (GHVDHGKT) coordinates GTP. The G2 stretch occupies residues 272 to 276 (GITQH). Positions 293–296 (DTPG) are G3. GTP-binding positions include 293–297 (DTPGH) and 347–350 (NKID). The tract at residues 347–350 (NKID) is G4. Positions 383–385 (SAK) are G5.

This sequence belongs to the TRAFAC class translation factor GTPase superfamily. Classic translation factor GTPase family. IF-2 subfamily.

The protein resides in the cytoplasm. In terms of biological role, one of the essential components for the initiation of protein synthesis. Protects formylmethionyl-tRNA from spontaneous hydrolysis and promotes its binding to the 30S ribosomal subunits. Also involved in the hydrolysis of GTP during the formation of the 70S ribosomal complex. The sequence is that of Translation initiation factor IF-2 from Roseiflexus castenholzii (strain DSM 13941 / HLO8).